We begin with the raw amino-acid sequence, 512 residues long: ATP synthase subunit alpha (512 aa).

ATP is bound at residue 169–176 (GDRQTGKT).

This sequence belongs to the ATPase alpha/beta chains family. As to quaternary structure, F-type ATPases have 2 components, CF(1) - the catalytic core - and CF(0) - the membrane proton channel. CF(1) has five subunits: alpha(3), beta(3), gamma(1), delta(1), epsilon(1). CF(0) has three main subunits: a(1), b(2) and c(9-12). The alpha and beta chains form an alternating ring which encloses part of the gamma chain. CF(1) is attached to CF(0) by a central stalk formed by the gamma and epsilon chains, while a peripheral stalk is formed by the delta and b chains.

It localises to the cell membrane. The enzyme catalyses ATP + H2O + 4 H(+)(in) = ADP + phosphate + 5 H(+)(out). In terms of biological role, produces ATP from ADP in the presence of a proton gradient across the membrane. The alpha chain is a regulatory subunit. This is ATP synthase subunit alpha from Elusimicrobium minutum (strain Pei191).